Consider the following 173-residue polypeptide: Lipoprotein signal peptidase (173 aa).

The next 3 membrane-spanning stretches (helical) occupy residues 12-32 (WLWLAAIMLALDQVTKYWTIQ), 67-87 (WQRYLFTAIAIVVSSYLVYLL), and 102-122 (ALILSGALGNVVDRMMFGYVI). Catalysis depends on residues Asp-123 and Asp-141. A helical membrane pass occupies residues 137-157 (FNIADSAIFTGAVIMIFESFF).

Belongs to the peptidase A8 family.

It localises to the cell inner membrane. The catalysed reaction is Release of signal peptides from bacterial membrane prolipoproteins. Hydrolyzes -Xaa-Yaa-Zaa-|-(S,diacylglyceryl)Cys-, in which Xaa is hydrophobic (preferably Leu), and Yaa (Ala or Ser) and Zaa (Gly or Ala) have small, neutral side chains.. It participates in protein modification; lipoprotein biosynthesis (signal peptide cleavage). In terms of biological role, this protein specifically catalyzes the removal of signal peptides from prolipoproteins. The polypeptide is Lipoprotein signal peptidase (Psychromonas ingrahamii (strain DSM 17664 / CCUG 51855 / 37)).